The chain runs to 416 residues: Phosphatidylserine decarboxylase proenzyme, mitochondrial (416 aa).

The Mitochondrial matrix portion of the chain corresponds to 1-67; sequence MPGKSTRPLP…GRLHFPQLAL (67 aa). A helical membrane pass occupies residues 68–86; that stretch reads RRRLGQLSCMSKPALKLRS. Residues 87–416 are Mitochondrial intermembrane-facing; it reads WPLTVLYYLL…IRFGEALGSL (330 aa). Active-site charge relay system; for autoendoproteolytic cleavage activity residues include aspartate 198, histidine 274, and serine 385. Serine 385 serves as the catalytic Schiff-base intermediate with substrate; via pyruvic acid; for decarboxylase activity. At serine 385 the chain carries Pyruvic acid (Ser); by autocatalysis.

This sequence belongs to the phosphatidylserine decarboxylase family. PSD-B subfamily. Eukaryotic type I sub-subfamily. Heterodimer of a large membrane-associated beta subunit and a small pyruvoyl-containing alpha subunit. It depends on pyruvate as a cofactor. Post-translationally, is synthesized initially as an inactive proenzyme. Formation of the active enzyme involves a self-maturation process in which the active site pyruvoyl group is generated from an internal serine residue via an autocatalytic post-translational modification. Two non-identical subunits are generated from the proenzyme in this reaction, and the pyruvate is formed at the N-terminus of the alpha chain, which is derived from the carboxyl end of the proenzyme. The autoendoproteolytic cleavage occurs by a canonical serine protease mechanism, in which the side chain hydroxyl group of the serine supplies its oxygen atom to form the C-terminus of the beta chain, while the remainder of the serine residue undergoes an oxidative deamination to produce ammonia and the pyruvoyl prosthetic group on the alpha chain. During this reaction, the Ser that is part of the protease active site of the proenzyme becomes the pyruvoyl prosthetic group, which constitutes an essential element of the active site of the mature decarboxylase.

The protein localises to the mitochondrion inner membrane. The protein resides in the cytoplasm. It localises to the lipid droplet. The catalysed reaction is a 1,2-diacyl-sn-glycero-3-phospho-L-serine + H(+) = a 1,2-diacyl-sn-glycero-3-phosphoethanolamine + CO2. It participates in phospholipid metabolism; phosphatidylethanolamine biosynthesis. In terms of biological role, catalyzes the formation of phosphatidylethanolamine (PtdEtn) from phosphatidylserine (PtdSer). Plays a central role in phospholipid metabolism and in the interorganelle trafficking of phosphatidylserine. May be involved in lipid droplet biogenesis at the endoplasmic reticulum membrane. In Bos taurus (Bovine), this protein is Phosphatidylserine decarboxylase proenzyme, mitochondrial.